The following is a 273-amino-acid chain: Bifunctional protein FolD (273 aa).

Residues 155-157 (GRS), Ser180, and Thr221 contribute to the NADP(+) site.

Belongs to the tetrahydrofolate dehydrogenase/cyclohydrolase family. In terms of assembly, homodimer.

The enzyme catalyses (6R)-5,10-methylene-5,6,7,8-tetrahydrofolate + NADP(+) = (6R)-5,10-methenyltetrahydrofolate + NADPH. The catalysed reaction is (6R)-5,10-methenyltetrahydrofolate + H2O = (6R)-10-formyltetrahydrofolate + H(+). Its pathway is one-carbon metabolism; tetrahydrofolate interconversion. Functionally, catalyzes the oxidation of 5,10-methylenetetrahydrofolate to 5,10-methenyltetrahydrofolate and then the hydrolysis of 5,10-methenyltetrahydrofolate to 10-formyltetrahydrofolate. The polypeptide is Bifunctional protein FolD (Coprothermobacter proteolyticus (strain ATCC 35245 / DSM 5265 / OCM 4 / BT)).